The following is a 764-amino-acid chain: MTTAHILGFPRIGAQRELKFALERYWRDGASADAERALVDTGRALRAAHWQTQRDAGLDCVTVGDFAWYDHVLTTLAHVGGLPRRFGFDARALTLADYFAAARGNAAQPAMEMTKWFDTNYHYLVPEYSPATTFGPGVEWLFDEVREARALGHRPKAALVGPLTLLWLGKARDGLADRLELLPRLVPAYRALLARLREAGVDWVQIDEPIFALDLPAAWRDAARPAYEALVPGAPKLLVATYFDDVSEHAALLKALPVAGLHVDLVRGDAQLDAFVADYPADKVLSCGIVDGRNVWRNDLDRSLARLAPVHETLGERLWIATSCSLLHAPVDLAHEPKLDDELKAWLAFAVQKTREVAALRDALAKGRAAVAAEFDAAAVAAAARRTSARIHNPLVKRRVAALTDADARRASAYPARAAAQRARFDLPPLPTTTIGSFPQTPEIRRARAAFRQGVLDHLGYLEAMREQVRIAIDKQLSYGLDVLVHGEAERNDMVEYFGELMWGFAITSNGWVQSYGSRCVKPPLVYGDVYLPEPMTVGWASYAQSLTTKPVKGMLTGPVTMLQWSFVRDDQPRATTALQIALALRQETLDLEKAGIGMIQVDEPALREGLPLKARDRAEYLDWAVRAFRIAASGVADDTQIHTHMCYSEFGDILPSIAALDADVISIETTRSNMELLDAFETFEYPNEIGPGVYDIHSPRVPDADEIERLILLALERIPAQRLWVNPDCGLKTREWRQVDAALAAMVDAAKRVRQTVEQAVPA.

5-methyltetrahydropteroyltri-L-glutamate contacts are provided by residues 16–19 (RELK) and Lys-115. Residues 435-437 (IGS) and Glu-488 each bind L-homocysteine. Residues 435 to 437 (IGS) and Glu-488 contribute to the L-methionine site. 5-methyltetrahydropteroyltri-L-glutamate-binding positions include 519–520 (RC) and Trp-565. Position 603 (Asp-603) interacts with L-homocysteine. Residue Asp-603 participates in L-methionine binding. Glu-609 contacts 5-methyltetrahydropteroyltri-L-glutamate. 3 residues coordinate Zn(2+): His-645, Cys-647, and Glu-669. Catalysis depends on His-698, which acts as the Proton donor. Residue Cys-730 participates in Zn(2+) binding.

It belongs to the vitamin-B12 independent methionine synthase family. Zn(2+) serves as cofactor.

It carries out the reaction 5-methyltetrahydropteroyltri-L-glutamate + L-homocysteine = tetrahydropteroyltri-L-glutamate + L-methionine. It functions in the pathway amino-acid biosynthesis; L-methionine biosynthesis via de novo pathway; L-methionine from L-homocysteine (MetE route): step 1/1. Catalyzes the transfer of a methyl group from 5-methyltetrahydrofolate to homocysteine resulting in methionine formation. The sequence is that of 5-methyltetrahydropteroyltriglutamate--homocysteine methyltransferase from Burkholderia thailandensis (strain ATCC 700388 / DSM 13276 / CCUG 48851 / CIP 106301 / E264).